The sequence spans 501 residues: Glycerol kinase (501 aa).

Position 11 (T11) interacts with ADP. T11, T12, and S13 together coordinate ATP. T11 lines the sn-glycerol 3-phosphate pocket. Position 15 (R15) interacts with ADP. Sn-glycerol 3-phosphate-binding residues include R81, E82, Y133, and D242. Residues R81, E82, Y133, D242, and Q243 each contribute to the glycerol site. Residues T264 and G307 each contribute to the ADP site. ATP contacts are provided by T264, G307, Q311, and G409. 2 residues coordinate ADP: G409 and N413.

It belongs to the FGGY kinase family.

It catalyses the reaction glycerol + ATP = sn-glycerol 3-phosphate + ADP + H(+). The protein operates within polyol metabolism; glycerol degradation via glycerol kinase pathway; sn-glycerol 3-phosphate from glycerol: step 1/1. With respect to regulation, inhibited by fructose 1,6-bisphosphate (FBP). Functionally, key enzyme in the regulation of glycerol uptake and metabolism. Catalyzes the phosphorylation of glycerol to yield sn-glycerol 3-phosphate. The polypeptide is Glycerol kinase (Borreliella afzelii (strain PKo) (Borrelia afzelii)).